We begin with the raw amino-acid sequence, 425 residues long: 2-methylserine hydroxymethyltransferase (425 aa).

Residues leucine 126 and 130–132 each bind (6S)-5,6,7,8-tetrahydrofolate; that span reads GHL. Lysine 235 carries the post-translational modification N6-(pyridoxal phosphate)lysine.

Belongs to the SHMT family. In terms of assembly, homodimer. Pyridoxal 5'-phosphate is required as a cofactor.

Its subcellular location is the cytoplasm. It carries out the reaction (6R)-5,10-methylene-5,6,7,8-tetrahydrofolate + D-alanine + H2O = 2-methylserine + (6S)-5,6,7,8-tetrahydrofolate. It functions in the pathway one-carbon metabolism; tetrahydrofolate interconversion. In terms of biological role, catalyzes the reversible interconversion of alpha-methyl-L-serine to D-alanine with tetrahydrofolate (THF) serving as the one-carbon carrier. Cannot use alpha-methyl-D-serine, L-serine, D-serine or L-alanine. This is 2-methylserine hydroxymethyltransferase from Aminobacter sp.